Consider the following 706-residue polypeptide: Glycogen [starch] synthase (706 aa).

Arginine 26 serves as a coordination point for UDP. Histidine 191 and arginine 197 together coordinate UDP-alpha-D-glucose. Alpha-D-glucose 6-phosphate contacts are provided by histidine 277, glutamate 278, glutamine 280, histidine 283, and lysine 287. Position 317 (arginine 317) interacts with UDP. Arginine 317 provides a ligand contact to UDP-alpha-D-glucose. Alpha-D-glucose 6-phosphate is bound at residue histidine 491. UDP-alpha-D-glucose-binding residues include glutamate 500, tryptophan 502, and glycine 503. Threonine 505 provides a ligand contact to UDP. Residues arginine 572 and arginine 576 each coordinate alpha-D-glucose 6-phosphate. Positions 670-706 (PEEEDPEEYPFPLTLKQRTGPGSPLDSIQGLQLNGTR) are disordered.

This sequence belongs to the glycosyltransferase 3 family. As to quaternary structure, interacts with glucogenin gnn; the interaction is direct.

It carries out the reaction [(1-&gt;4)-alpha-D-glucosyl](n) + UDP-alpha-D-glucose = [(1-&gt;4)-alpha-D-glucosyl](n+1) + UDP + H(+). Its pathway is glycan biosynthesis; glycogen biosynthesis. Its activity is regulated as follows. Allosteric activation by glucose-6-phosphate, and phosphorylation by a cAMP-dependent kinase. Functionally, glycogen synthase participates in the glycogen biosynthetic process along with glycogenin and glycogen branching enzyme. Extends the primer composed of a few glucose units formed by glycogenin by adding new glucose units to it. In this context, glycogen synthase transfers the glycosyl residue from UDP-Glc to the non-reducing end of alpha-1,4-glucan. The protein is Glycogen [starch] synthase (gsy-1) of Neurospora crassa (strain ATCC 24698 / 74-OR23-1A / CBS 708.71 / DSM 1257 / FGSC 987).